The sequence spans 548 residues: Phenylalanine--tRNA ligase beta subunit (548 aa).

Residues 271–346 (LSEAAAKLDP…ISIGYEALGP (76 aa)) enclose the B5 domain. Mg(2+) contacts are provided by Asp324, Asp330, Glu333, and Asp334.

Belongs to the phenylalanyl-tRNA synthetase beta subunit family. Type 2 subfamily. As to quaternary structure, tetramer of two alpha and two beta subunits. Mg(2+) is required as a cofactor.

The protein resides in the cytoplasm. It catalyses the reaction tRNA(Phe) + L-phenylalanine + ATP = L-phenylalanyl-tRNA(Phe) + AMP + diphosphate + H(+). In Aeropyrum pernix (strain ATCC 700893 / DSM 11879 / JCM 9820 / NBRC 100138 / K1), this protein is Phenylalanine--tRNA ligase beta subunit.